Here is a 108-residue protein sequence, read N- to C-terminus: ATP-dependent Clp protease adapter protein ClpS (108 aa).

This sequence belongs to the ClpS family. Binds to the N-terminal domain of the chaperone ClpA.

Its function is as follows. Involved in the modulation of the specificity of the ClpAP-mediated ATP-dependent protein degradation. This Cupriavidus necator (strain ATCC 17699 / DSM 428 / KCTC 22496 / NCIMB 10442 / H16 / Stanier 337) (Ralstonia eutropha) protein is ATP-dependent Clp protease adapter protein ClpS.